Consider the following 245-residue polypeptide: Probable transcriptional regulatory protein pc1328 (245 aa).

This sequence belongs to the TACO1 family.

It localises to the cytoplasm. The protein is Probable transcriptional regulatory protein pc1328 of Protochlamydia amoebophila (strain UWE25).